The following is a 950-amino-acid chain: Glycine dehydrogenase (decarboxylating) (950 aa).

An N6-(pyridoxal phosphate)lysine modification is found at Lys-699.

This sequence belongs to the GcvP family. In terms of assembly, the glycine cleavage system is composed of four proteins: P, T, L and H. Pyridoxal 5'-phosphate is required as a cofactor.

The enzyme catalyses N(6)-[(R)-lipoyl]-L-lysyl-[glycine-cleavage complex H protein] + glycine + H(+) = N(6)-[(R)-S(8)-aminomethyldihydrolipoyl]-L-lysyl-[glycine-cleavage complex H protein] + CO2. The glycine cleavage system catalyzes the degradation of glycine. The P protein binds the alpha-amino group of glycine through its pyridoxal phosphate cofactor; CO(2) is released and the remaining methylamine moiety is then transferred to the lipoamide cofactor of the H protein. This chain is Glycine dehydrogenase (decarboxylating), found in Chromobacterium violaceum (strain ATCC 12472 / DSM 30191 / JCM 1249 / CCUG 213 / NBRC 12614 / NCIMB 9131 / NCTC 9757 / MK).